Consider the following 462-residue polypeptide: L-seryl-tRNA(Sec) selenium transferase (462 aa).

Position 293 is an N6-(pyridoxal phosphate)lysine (lysine 293).

The protein belongs to the SelA family. Requires pyridoxal 5'-phosphate as cofactor.

The protein resides in the cytoplasm. It carries out the reaction L-seryl-tRNA(Sec) + selenophosphate + H(+) = L-selenocysteinyl-tRNA(Sec) + phosphate. The protein operates within aminoacyl-tRNA biosynthesis; selenocysteinyl-tRNA(Sec) biosynthesis; selenocysteinyl-tRNA(Sec) from L-seryl-tRNA(Sec) (bacterial route): step 1/1. Converts seryl-tRNA(Sec) to selenocysteinyl-tRNA(Sec) required for selenoprotein biosynthesis. This Clostridium botulinum (strain ATCC 19397 / Type A) protein is L-seryl-tRNA(Sec) selenium transferase.